Here is a 312-residue protein sequence, read N- to C-terminus: Beta-ketoacyl-[acyl-carrier-protein] synthase III (312 aa).

Catalysis depends on residues cysteine 112 and histidine 237. An ACP-binding region spans residues 238–242; the sequence is QANIR. Asparagine 267 is an active-site residue.

The protein belongs to the thiolase-like superfamily. FabH family. In terms of assembly, homodimer.

It is found in the cytoplasm. The enzyme catalyses malonyl-[ACP] + acetyl-CoA + H(+) = 3-oxobutanoyl-[ACP] + CO2 + CoA. It functions in the pathway lipid metabolism; fatty acid biosynthesis. Functionally, catalyzes the condensation reaction of fatty acid synthesis by the addition to an acyl acceptor of two carbons from malonyl-ACP. Catalyzes the first condensation reaction which initiates fatty acid synthesis and may therefore play a role in governing the total rate of fatty acid production. Possesses both acetoacetyl-ACP synthase and acetyl transacylase activities. Its substrate specificity determines the biosynthesis of branched-chain and/or straight-chain of fatty acids. This chain is Beta-ketoacyl-[acyl-carrier-protein] synthase III, found in Oceanobacillus iheyensis (strain DSM 14371 / CIP 107618 / JCM 11309 / KCTC 3954 / HTE831).